A 192-amino-acid chain; its full sequence is MADTSDFRNGMTFIWKDDLWEIVDFLHVKPGKGGAFVRTTLKNVKDGHEVEETFRAGAKVDEVRVERREHQYLYEDDYGLHFMDQESYEQFSMPPEQVEGREFLKEGGDVDIVFRADTEEPLRTEVPQKVDLEVTETTPGVKGDTAQGGDKPATLESGATIDVPLFINEGDVVRLNTETEEYETRVSAASTV.

The disordered stretch occupies residues 133–157 (EVTETTPGVKGDTAQGGDKPATLES).

This sequence belongs to the elongation factor P family.

The protein resides in the cytoplasm. The protein operates within protein biosynthesis; polypeptide chain elongation. Involved in peptide bond synthesis. Stimulates efficient translation and peptide-bond synthesis on native or reconstituted 70S ribosomes in vitro. Probably functions indirectly by altering the affinity of the ribosome for aminoacyl-tRNA, thus increasing their reactivity as acceptors for peptidyl transferase. The protein is Elongation factor P of Salinibacter ruber (strain DSM 13855 / M31).